The chain runs to 80 residues: U-actitoxin-Avd3s (80 aa).

The signal sequence occupies residues 1-14 (FLLCFFLVADVSYG). The region spanning 19–69 (CLLPMDVGRCRARHPRYYYNSSSKRCEMFNYGGCRGNANNFITKKECEKVC) is the BPTI/Kunitz inhibitor domain. Cystine bridges form between Cys-19–Cys-69, Cys-28–Cys-52, and Cys-44–Cys-65. Positions 74–80 (RDSPKEN) are excised as a propeptide.

This sequence belongs to the venom Kunitz-type family. Sea anemone type 2 potassium channel toxin subfamily.

Its subcellular location is the secreted. It localises to the nematocyst. In terms of biological role, serine protease inhibitor that inhibits both tissue and plasma kallikreins. Has hemolytic activity. Inhibits voltage-gated potassium channels (Kv). This is U-actitoxin-Avd3s from Anemonia viridis (Snakelocks anemone).